We begin with the raw amino-acid sequence, 366 residues long: Carbamoyl phosphate synthase small chain (366 aa).

Residues 1 to 168 form a CPSase region; the sequence is MYGILVLEDG…KETVIYNAED (168 aa). L-glutamine contacts are provided by S45, G220, and G222. A Glutamine amidotransferase type-1 domain is found at 172–363; it reads RCVLIDCGVK…VELGIKFKAE (192 aa). Catalysis depends on C247, which acts as the Nucleophile. Residues L248, Q251, N289, G291, and F292 each contribute to the L-glutamine site. Active-site residues include H336 and E338.

The protein belongs to the CarA family. As to quaternary structure, composed of two chains; the small (or glutamine) chain promotes the hydrolysis of glutamine to ammonia, which is used by the large (or ammonia) chain to synthesize carbamoyl phosphate. Tetramer of heterodimers (alpha,beta)4.

It carries out the reaction hydrogencarbonate + L-glutamine + 2 ATP + H2O = carbamoyl phosphate + L-glutamate + 2 ADP + phosphate + 2 H(+). The enzyme catalyses L-glutamine + H2O = L-glutamate + NH4(+). Its pathway is amino-acid biosynthesis; L-arginine biosynthesis; carbamoyl phosphate from bicarbonate: step 1/1. It functions in the pathway pyrimidine metabolism; UMP biosynthesis via de novo pathway; (S)-dihydroorotate from bicarbonate: step 1/3. Functionally, small subunit of the glutamine-dependent carbamoyl phosphate synthetase (CPSase). CPSase catalyzes the formation of carbamoyl phosphate from the ammonia moiety of glutamine, carbonate, and phosphate donated by ATP, constituting the first step of 2 biosynthetic pathways, one leading to arginine and/or urea and the other to pyrimidine nucleotides. The small subunit (glutamine amidotransferase) binds and cleaves glutamine to supply the large subunit with the substrate ammonia. The sequence is that of Carbamoyl phosphate synthase small chain from Methanococcus maripaludis (strain C5 / ATCC BAA-1333).